A 111-amino-acid polypeptide reads, in one-letter code: UPF0342 protein SAG1376 (111 aa).

The span at 52-63 (QEMMQSGQMPSQ) shows a compositional bias: polar residues. The segment at 52-71 (QEMMQSGQMPSQEEQDEMSK) is disordered.

The protein belongs to the UPF0342 family.

This chain is UPF0342 protein SAG1376, found in Streptococcus agalactiae serotype V (strain ATCC BAA-611 / 2603 V/R).